Reading from the N-terminus, the 352-residue chain is Holliday junction branch migration complex subunit RuvB (352 aa).

The segment at 4-185 (PDRLISAVSG…FGIVQRLEFY (182 aa)) is large ATPase domain (RuvB-L). ATP-binding positions include isoleucine 24, arginine 25, glycine 66, lysine 69, threonine 70, threonine 71, 132–134 (EDF), arginine 175, tyrosine 185, and arginine 222. Residue threonine 70 participates in Mg(2+) binding. The small ATPAse domain (RuvB-S) stretch occupies residues 186–256 (NVEDLATIVS…IADKALNLLD (71 aa)). Residues 259-352 (ERGFDHLDRR…SDLFTSEDGN (94 aa)) form a head domain (RuvB-H) region. The DNA site is built by arginine 295, arginine 314, and arginine 319.

The protein belongs to the RuvB family. In terms of assembly, homohexamer. Forms an RuvA(8)-RuvB(12)-Holliday junction (HJ) complex. HJ DNA is sandwiched between 2 RuvA tetramers; dsDNA enters through RuvA and exits via RuvB. An RuvB hexamer assembles on each DNA strand where it exits the tetramer. Each RuvB hexamer is contacted by two RuvA subunits (via domain III) on 2 adjacent RuvB subunits; this complex drives branch migration. In the full resolvosome a probable DNA-RuvA(4)-RuvB(12)-RuvC(2) complex forms which resolves the HJ.

The protein localises to the cytoplasm. It catalyses the reaction ATP + H2O = ADP + phosphate + H(+). The RuvA-RuvB-RuvC complex processes Holliday junction (HJ) DNA during genetic recombination and DNA repair, while the RuvA-RuvB complex plays an important role in the rescue of blocked DNA replication forks via replication fork reversal (RFR). RuvA specifically binds to HJ cruciform DNA, conferring on it an open structure. The RuvB hexamer acts as an ATP-dependent pump, pulling dsDNA into and through the RuvAB complex. RuvB forms 2 homohexamers on either side of HJ DNA bound by 1 or 2 RuvA tetramers; 4 subunits per hexamer contact DNA at a time. Coordinated motions by a converter formed by DNA-disengaged RuvB subunits stimulates ATP hydrolysis and nucleotide exchange. Immobilization of the converter enables RuvB to convert the ATP-contained energy into a lever motion, pulling 2 nucleotides of DNA out of the RuvA tetramer per ATP hydrolyzed, thus driving DNA branch migration. The RuvB motors rotate together with the DNA substrate, which together with the progressing nucleotide cycle form the mechanistic basis for DNA recombination by continuous HJ branch migration. Branch migration allows RuvC to scan DNA until it finds its consensus sequence, where it cleaves and resolves cruciform DNA. The protein is Holliday junction branch migration complex subunit RuvB of Pseudomonas paraeruginosa (strain DSM 24068 / PA7) (Pseudomonas aeruginosa (strain PA7)).